We begin with the raw amino-acid sequence, 113 residues long: Large ribosomal subunit protein uL22 (113 aa).

Belongs to the universal ribosomal protein uL22 family. As to quaternary structure, part of the 50S ribosomal subunit.

This protein binds specifically to 23S rRNA; its binding is stimulated by other ribosomal proteins, e.g. L4, L17, and L20. It is important during the early stages of 50S assembly. It makes multiple contacts with different domains of the 23S rRNA in the assembled 50S subunit and ribosome. In terms of biological role, the globular domain of the protein is located near the polypeptide exit tunnel on the outside of the subunit, while an extended beta-hairpin is found that lines the wall of the exit tunnel in the center of the 70S ribosome. In Opitutus terrae (strain DSM 11246 / JCM 15787 / PB90-1), this protein is Large ribosomal subunit protein uL22.